Consider the following 326-residue polypeptide: CRISPR-associated endonuclease Cas1 (326 aa).

Positions 191, 255, and 269 each coordinate Mn(2+).

It belongs to the CRISPR-associated endonuclease Cas1 family. As to quaternary structure, homodimer. Interacts with Cas3, in the absence of crRNA. Mg(2+) is required as a cofactor. Requires Mn(2+) as cofactor.

Functionally, CRISPR (clustered regularly interspaced short palindromic repeat), is an adaptive immune system that provides protection against mobile genetic elements (viruses, transposable elements and conjugative plasmids). CRISPR clusters contain sequences complementary to antecedent mobile elements and target invading nucleic acids. CRISPR clusters are transcribed and processed into CRISPR RNA (crRNA). Acts as a dsDNA endonuclease. Involved in the integration of spacer DNA into the CRISPR cassette. The chain is CRISPR-associated endonuclease Cas1 from Pectobacterium atrosepticum (strain SCRI 1043 / ATCC BAA-672) (Erwinia carotovora subsp. atroseptica).